The primary structure comprises 457 residues: Protein translocase subunit SecY (457 aa).

The Cytoplasmic segment spans residues Met-1–Pro-20. The chain crosses the membrane as a helical span at residues Glu-21–Pro-47. The Extracellular segment spans residues Leu-48 to Gln-59. Positions Val-60–Phe-67 form an intramembrane region, helical. A discontinuously helical membrane pass occupies residues Val-60–Ile-88. An intramembrane segment occupies Ala-68–Ile-79. The helical intramembrane region spans Gly-80–Ile-88. The Cytoplasmic segment spans residues Ile-89–Arg-109. The helical transmembrane segment at Lys-110–Gly-134 threads the bilayer. Residues Arg-135–Pro-146 are Extracellular-facing. Residues Leu-147–Gln-171 traverse the membrane as a helical segment. The Cytoplasmic segment spans residues Lys-172 to Ser-178. Residues Ala-179–Phe-197 traverse the membrane as a helical segment. Residues Gly-198–Pro-229 are Extracellular-facing. The helical transmembrane segment at Asp-230–Arg-251 threads the bilayer. Residues Val-252 to Thr-276 are Cytoplasmic-facing. The helical transmembrane segment at Asn-277–Ala-298 threads the bilayer. Residues Asp-299–Val-332 lie on the Extracellular side of the membrane. Residues Lys-333–Trp-352 form a helical membrane-spanning segment. Residues Val-353–Leu-395 lie on the Cytoplasmic side of the membrane. The helical transmembrane segment at Thr-396 to Gly-414 threads the bilayer. Residues Ala-415–Gly-417 lie on the Extracellular side of the membrane. Residues Thr-418 to Tyr-432 traverse the membrane as a helical segment. Residues Tyr-433 to Val-457 are Cytoplasmic-facing.

This sequence belongs to the SecY/SEC61-alpha family. Component of the Sec protein translocase complex. Heterotrimer consisting of alpha (SecY), beta (SecG) and gamma (SecE) subunits. The heterotrimers can form oligomers, although 1 heterotrimer is thought to be able to translocate proteins. Interacts with the ribosome. May interact with SecDF, and other proteins may be involved.

It is found in the cell membrane. The central subunit of the protein translocation channel SecYEG. Consists of two halves formed by TMs 1-5 and 6-10. These two domains form a lateral gate at the front which open onto the bilayer between TMs 2 and 7, and are clamped together by SecE at the back. The channel is closed by both a pore ring composed of hydrophobic SecY resides and a short helix (helix 2A) on the extracellular side of the membrane which forms a plug. The plug probably moves laterally to allow the channel to open. The ring and the pore may move independently. The protein is Protein translocase subunit SecY of Aeropyrum pernix (strain ATCC 700893 / DSM 11879 / JCM 9820 / NBRC 100138 / K1).